Consider the following 243-residue polypeptide: 1-(5-phosphoribosyl)-5-[(5-phosphoribosylamino)methylideneamino] imidazole-4-carboxamide isomerase (243 aa).

D8 (proton acceptor) is an active-site residue. Catalysis depends on D129, which acts as the Proton donor.

This sequence belongs to the HisA/HisF family.

It localises to the cytoplasm. It carries out the reaction 1-(5-phospho-beta-D-ribosyl)-5-[(5-phospho-beta-D-ribosylamino)methylideneamino]imidazole-4-carboxamide = 5-[(5-phospho-1-deoxy-D-ribulos-1-ylimino)methylamino]-1-(5-phospho-beta-D-ribosyl)imidazole-4-carboxamide. It participates in amino-acid biosynthesis; L-histidine biosynthesis; L-histidine from 5-phospho-alpha-D-ribose 1-diphosphate: step 4/9. The protein is 1-(5-phosphoribosyl)-5-[(5-phosphoribosylamino)methylideneamino] imidazole-4-carboxamide isomerase of Azorhizobium caulinodans (strain ATCC 43989 / DSM 5975 / JCM 20966 / LMG 6465 / NBRC 14845 / NCIMB 13405 / ORS 571).